The primary structure comprises 707 residues: DNA ligase (707 aa).

Residues 1–23 form a disordered region; that stretch reads MSSKATQDPEAVLAEQSDDATEA. NAD(+)-binding positions include 53–57, 103–104, and glutamate 133; these read DAEFD and SL. The active-site N6-AMP-lysine intermediate is lysine 135. NAD(+)-binding residues include arginine 156, glutamate 196, lysine 315, and lysine 339. Zn(2+) contacts are provided by cysteine 433, cysteine 436, cysteine 452, and cysteine 458. The region spanning 622–707 is the BRCT domain; sequence SIERTLDGLS…LENGPDTPDS (86 aa).

It belongs to the NAD-dependent DNA ligase family. LigA subfamily. Requires Mg(2+) as cofactor. It depends on Mn(2+) as a cofactor.

The enzyme catalyses NAD(+) + (deoxyribonucleotide)n-3'-hydroxyl + 5'-phospho-(deoxyribonucleotide)m = (deoxyribonucleotide)n+m + AMP + beta-nicotinamide D-nucleotide.. Functionally, DNA ligase that catalyzes the formation of phosphodiester linkages between 5'-phosphoryl and 3'-hydroxyl groups in double-stranded DNA using NAD as a coenzyme and as the energy source for the reaction. It is essential for DNA replication and repair of damaged DNA. The chain is DNA ligase from Mycolicibacterium vanbaalenii (strain DSM 7251 / JCM 13017 / BCRC 16820 / KCTC 9966 / NRRL B-24157 / PYR-1) (Mycobacterium vanbaalenii).